Reading from the N-terminus, the 375-residue chain is 23S rRNA (uracil(747)-C(5))-methyltransferase RlmC (375 aa).

[4Fe-4S] cluster-binding residues include cysteine 3, cysteine 11, cysteine 14, and cysteine 87. Positions 212, 241, 262, and 307 each coordinate S-adenosyl-L-methionine. The Nucleophile role is filled by cysteine 334.

Belongs to the class I-like SAM-binding methyltransferase superfamily. RNA M5U methyltransferase family. RlmC subfamily.

The enzyme catalyses uridine(747) in 23S rRNA + S-adenosyl-L-methionine = 5-methyluridine(747) in 23S rRNA + S-adenosyl-L-homocysteine + H(+). Functionally, catalyzes the formation of 5-methyl-uridine at position 747 (m5U747) in 23S rRNA. The polypeptide is 23S rRNA (uracil(747)-C(5))-methyltransferase RlmC (Salmonella arizonae (strain ATCC BAA-731 / CDC346-86 / RSK2980)).